The primary structure comprises 905 residues: Protein translocase subunit SecA (905 aa).

ATP contacts are provided by residues Gln-87, 105–109 (GEGKT), and Asp-509. Cys-890, Cys-892, Cys-901, and His-902 together coordinate Zn(2+).

Belongs to the SecA family. As to quaternary structure, monomer and homodimer. Part of the essential Sec protein translocation apparatus which comprises SecA, SecYEG and auxiliary proteins SecDF-YajC and YidC. Zn(2+) is required as a cofactor.

It is found in the cell inner membrane. The protein resides in the cytoplasm. The catalysed reaction is ATP + H2O + cellular proteinSide 1 = ADP + phosphate + cellular proteinSide 2.. In terms of biological role, part of the Sec protein translocase complex. Interacts with the SecYEG preprotein conducting channel. Has a central role in coupling the hydrolysis of ATP to the transfer of proteins into and across the cell membrane, serving both as a receptor for the preprotein-SecB complex and as an ATP-driven molecular motor driving the stepwise translocation of polypeptide chains across the membrane. The sequence is that of Protein translocase subunit SecA from Acinetobacter baylyi (strain ATCC 33305 / BD413 / ADP1).